Here is an 84-residue protein sequence, read N- to C-terminus: Exodeoxyribonuclease 7 small subunit (84 aa).

This sequence belongs to the XseB family. Heterooligomer composed of large and small subunits.

The protein localises to the cytoplasm. The catalysed reaction is Exonucleolytic cleavage in either 5'- to 3'- or 3'- to 5'-direction to yield nucleoside 5'-phosphates.. Its function is as follows. Bidirectionally degrades single-stranded DNA into large acid-insoluble oligonucleotides, which are then degraded further into small acid-soluble oligonucleotides. The sequence is that of Exodeoxyribonuclease 7 small subunit from Haemophilus influenzae (strain ATCC 51907 / DSM 11121 / KW20 / Rd).